We begin with the raw amino-acid sequence, 167 residues long: Large ribosomal subunit protein bL9 (167 aa).

This sequence belongs to the bacterial ribosomal protein bL9 family.

Binds to the 23S rRNA. This is Large ribosomal subunit protein bL9 from Nitratidesulfovibrio vulgaris (strain DSM 19637 / Miyazaki F) (Desulfovibrio vulgaris).